The sequence spans 311 residues: MSSEQAAAMGRVAVLMGGDSAEREISLISGRAVFEALRRRGVDAEAVDTAQVALAELTGFDRAFIALHGRGGEDGVIQGALEALGVPYTGSGVLGCAIGMDKWRTKLLWRGAELPVPPGALLRPETNRQALIGSVGLPLMIKPAHEGSSIGMAKVERPEELEAARAEAARYDDLVLAERWIEGGEYTVAILGEEALPAIRLETPRGFYDFEAKYRSGDTRYHCPAGLTEAEEQQIRQLALDAFRVAGASGWGRVDFMRDRQGRFWLLEINTIPGMTDHSLVPMAARAVGIDFDELCWRILLDSRRREAGRP.

The ATP-grasp domain occupies 106–301 (KLLWRGAELP…FDELCWRILL (196 aa)). 132-187 (IGSVGLPLMIKPAHEGSSIGMAKVERPEELEAARAEAARYDDLVLAERWIEGGEYT) contacts ATP. Mg(2+) is bound by residues aspartate 255, glutamate 268, and asparagine 270.

This sequence belongs to the D-alanine--D-alanine ligase family. The cofactor is Mg(2+). Requires Mn(2+) as cofactor.

Its subcellular location is the cytoplasm. The catalysed reaction is 2 D-alanine + ATP = D-alanyl-D-alanine + ADP + phosphate + H(+). It functions in the pathway cell wall biogenesis; peptidoglycan biosynthesis. In terms of biological role, cell wall formation. The sequence is that of D-alanine--D-alanine ligase from Alkalilimnicola ehrlichii (strain ATCC BAA-1101 / DSM 17681 / MLHE-1).